The primary structure comprises 328 residues: Biotin synthase (328 aa).

The Radical SAM core domain occupies Phe48 to Arg277. Cys66, Cys70, and Cys73 together coordinate [4Fe-4S] cluster. [2Fe-2S] cluster-binding residues include Ser142 and Cys202.

It belongs to the radical SAM superfamily. Biotin synthase family. As to quaternary structure, homodimer. [4Fe-4S] cluster is required as a cofactor. It depends on [2Fe-2S] cluster as a cofactor.

The enzyme catalyses (4R,5S)-dethiobiotin + (sulfur carrier)-SH + 2 reduced [2Fe-2S]-[ferredoxin] + 2 S-adenosyl-L-methionine = (sulfur carrier)-H + biotin + 2 5'-deoxyadenosine + 2 L-methionine + 2 oxidized [2Fe-2S]-[ferredoxin]. It functions in the pathway cofactor biosynthesis; biotin biosynthesis; biotin from 7,8-diaminononanoate: step 2/2. Functionally, catalyzes the conversion of dethiobiotin (DTB) to biotin by the insertion of a sulfur atom into dethiobiotin via a radical-based mechanism. The polypeptide is Biotin synthase (Citrifermentans bemidjiense (strain ATCC BAA-1014 / DSM 16622 / JCM 12645 / Bem) (Geobacter bemidjiensis)).